Consider the following 63-residue polypeptide: Large ribosomal subunit protein uL29 (63 aa).

It belongs to the universal ribosomal protein uL29 family.

The sequence is that of Large ribosomal subunit protein uL29 from Neisseria meningitidis serogroup C (strain 053442).